Here is a 509-residue protein sequence, read N- to C-terminus: Ribonuclease Y (509 aa).

A helical membrane pass occupies residues 3–23 (IIFSSIFAGFILGFLIRVFLG). Residues 197–257 (TVASVELPND…IRKELAKRTL (61 aa)) enclose the KH domain. One can recognise an HD domain in the interval 323–418 (VLSHSKETAI…VQIADAISAS (96 aa)).

This sequence belongs to the RNase Y family.

The protein resides in the cell membrane. In terms of biological role, endoribonuclease that initiates mRNA decay. The sequence is that of Ribonuclease Y from Borreliella afzelii (strain PKo) (Borrelia afzelii).